Consider the following 347-residue polypeptide: UDP-N-acetylenolpyruvoylglucosamine reductase (347 aa).

One can recognise an FAD-binding PCMH-type domain in the interval 16–187 (AIEQCSHYLV…IAVGLKLPKT (172 aa)). Arg163 is a catalytic residue. Catalysis depends on Ser233, which acts as the Proton donor. Glu328 is an active-site residue.

Belongs to the MurB family. Requires FAD as cofactor.

It localises to the cytoplasm. The catalysed reaction is UDP-N-acetyl-alpha-D-muramate + NADP(+) = UDP-N-acetyl-3-O-(1-carboxyvinyl)-alpha-D-glucosamine + NADPH + H(+). It functions in the pathway cell wall biogenesis; peptidoglycan biosynthesis. Its function is as follows. Cell wall formation. The protein is UDP-N-acetylenolpyruvoylglucosamine reductase of Vibrio vulnificus (strain CMCP6).